We begin with the raw amino-acid sequence, 386 residues long: Synaptotagmin-5 (386 aa).

Positions 1–16 (MFPEPPTPGSPAPETP) are enriched in pro residues. The tract at residues 1–21 (MFPEPPTPGSPAPETPPDSSR) is disordered. Residues 1–24 (MFPEPPTPGSPAPETPPDSSRIRQ) lie on the Vesicular side of the membrane. The helical transmembrane segment at 25–45 (GAVPAWVLATILLGSGLLVFS) threads the bilayer. The Cytoplasmic portion of the chain corresponds to 46–386 (SCFCLYRKRC…PDRARPIPAP (341 aa)). 2 consecutive C2 domains span residues 108 to 227 (QLGR…QAWR) and 239 to 372 (KLGD…AQWH). Ca(2+)-binding residues include Leu-138, Asp-139, Asp-145, Asp-197, Phe-198, Asp-199, Ser-202, Asp-205, Asp-270, Asp-276, Asp-330, and Asp-332.

It belongs to the synaptotagmin family. As to quaternary structure, homodimer. Interacts with both alpha- and beta-tubulin. Ca(2+) serves as cofactor. In terms of tissue distribution, expressed in kidney, adipose tissue, lung and heart, as well as at higher levels in brain.

It is found in the cytoplasmic vesicle. The protein resides in the secretory vesicle. Its subcellular location is the synaptic vesicle membrane. The protein localises to the recycling endosome membrane. Functionally, may be involved in Ca(2+)-dependent exocytosis of secretory vesicles through Ca(2+) and phospholipid binding to the C2 domain or may serve as Ca(2+) sensors in the process of vesicular trafficking and exocytosis. Regulates the Ca(2+)-dependent secretion of norepinephrine in PC12 cells. Required for export from the endocytic recycling compartment to the cell surface. The polypeptide is Synaptotagmin-5 (Syt5) (Rattus norvegicus (Rat)).